Consider the following 906-residue polypeptide: Protein translocase subunit SecA (906 aa).

Residues Q87, 105 to 109 (GEGKT), and D512 contribute to the ATP site. The segment at 839–896 (LEEQQRQQSEAAPRTYTHATAESQLADEEAAGEEGHTTFVRDEQKIGRNDPCPCGSGK) is disordered. Residues 871–886 (EEGHTTFVRDEQKIGR) show a composition bias toward basic and acidic residues. Residues C890, C892, C901, and H902 each contribute to the Zn(2+) site.

Belongs to the SecA family. In terms of assembly, monomer and homodimer. Part of the essential Sec protein translocation apparatus which comprises SecA, SecYEG and auxiliary proteins SecDF-YajC and YidC. The cofactor is Zn(2+).

The protein localises to the cell inner membrane. It is found in the cytoplasm. It carries out the reaction ATP + H2O + cellular proteinSide 1 = ADP + phosphate + cellular proteinSide 2.. Part of the Sec protein translocase complex. Interacts with the SecYEG preprotein conducting channel. Has a central role in coupling the hydrolysis of ATP to the transfer of proteins into and across the cell membrane, serving both as a receptor for the preprotein-SecB complex and as an ATP-driven molecular motor driving the stepwise translocation of polypeptide chains across the membrane. The protein is Protein translocase subunit SecA of Aeromonas salmonicida (strain A449).